Consider the following 323-residue polypeptide: tRNA U34 carboxymethyltransferase (323 aa).

Carboxy-S-adenosyl-L-methionine contacts are provided by residues Lys91, Trp105, Lys110, Gly130, 152–154 (DPT), 181–182 (IE), Met196, Tyr200, and Arg315.

It belongs to the class I-like SAM-binding methyltransferase superfamily. CmoB family. As to quaternary structure, homotetramer.

It carries out the reaction carboxy-S-adenosyl-L-methionine + 5-hydroxyuridine(34) in tRNA = 5-carboxymethoxyuridine(34) in tRNA + S-adenosyl-L-homocysteine + H(+). Catalyzes carboxymethyl transfer from carboxy-S-adenosyl-L-methionine (Cx-SAM) to 5-hydroxyuridine (ho5U) to form 5-carboxymethoxyuridine (cmo5U) at position 34 in tRNAs. The polypeptide is tRNA U34 carboxymethyltransferase (Escherichia coli O139:H28 (strain E24377A / ETEC)).